The chain runs to 117 residues: Eukaryotic translation initiation factor 4E-binding protein 1 (117 aa).

Polar residues-rich tracts occupy residues 1 to 12 (MSAGSSCSQTPS) and 33 to 47 (YSTT…TTPG). The tract at residues 1–47 (MSAGSSCSQTPSRAIPTRRVALGDGVQLPPGDYSTTPGGTLFSTTPG) is disordered. Ser2 is subject to N-acetylserine. 2 positions are modified to phosphothreonine: Thr36 and Thr40. Ser43 bears the Phosphoserine mark. Thr45 and Thr49 each carry phosphothreonine. A Phosphotyrosine modification is found at Tyr53. Positions 53-59 (YDRKFLM) match the YXXXXLphi motif motif. A Glycyl lysine isopeptide (Lys-Gly) (interchain with G-Cter in ubiquitin) cross-link involves residue Lys56. Ser64 is subject to Phosphoserine. The disordered stretch occupies residues 64–117 (SPVAKTPPKDLPAIPGVTSPTSDEPPMQASQSQLPSSPEDKRAGGEESQFEMDI). At Thr69 the chain carries Phosphothreonine. Positions 81–99 (TSPTSDEPPMQASQSQLPS) are enriched in polar residues. 5 positions are modified to phosphoserine: Ser82, Ser95, Ser99, Ser100, and Ser111. The TOS motif motif lies at 113–117 (FEMDI).

This sequence belongs to the eIF4E-binding protein family. As to quaternary structure, hypophosphorylated EIF4EBP1 competes with EIF4G1/EIF4G3 to interact with EIF4E; insulin stimulated MAP-kinase (MAPK1 and MAPK3) or mTORC1 phosphorylation of EIF4EBP1 causes dissociation of the complex allowing EIF4G1/EIF4G3 to bind and consequent initiation of translation. Interacts (via TOS motif) with RPTOR; promoting phosphorylation by mTORC1. Post-translationally, phosphorylated on serine and threonine residues in response to insulin, EGF and PDGF. Phosphorylation at Thr-36, Thr-45, Ser-64 and Thr-69, corresponding to the hyperphosphorylated form, is regulated by mTORC1 and abolishes binding to EIF4E. Ubiquitinated: when eIF4E levels are low, hypophosphorylated form is ubiquitinated by the BCR(KLHL25) complex, leading to its degradation and serving as a homeostatic mechanism to maintain translation and prevent eIF4E inhibition when eIF4E levels are low. Not ubiquitinated when hyperphosphorylated (at Thr-36, Thr-45, Ser-64 and Thr-69) or associated with eIF4E. In terms of tissue distribution, highest expression in fat cells.

It localises to the cytoplasm. The protein resides in the nucleus. Repressor of translation initiation that regulates EIF4E activity by preventing its assembly into the eIF4F complex: hypophosphorylated form competes with EIF4G1/EIF4G3 and strongly binds to EIF4E, leading to repress translation. In contrast, hyperphosphorylated form dissociates from EIF4E, allowing interaction between EIF4G1/EIF4G3 and EIF4E, leading to initiation of translation. Mediates the regulation of protein translation by hormones, growth factors and other stimuli that signal through the MAP kinase and mTORC1 pathways. This chain is Eukaryotic translation initiation factor 4E-binding protein 1 (Eif4ebp1), found in Mus musculus (Mouse).